We begin with the raw amino-acid sequence, 410 residues long: Sprouty-related, EVH1 domain-containing protein 2 (410 aa).

The region spanning 5 to 122 (THPDDDSYIV…RGVRKAIEDL (118 aa)) is the WH1 domain. The tract at residues 127 to 171 (TTSSSTLHNEAELGDDDVFTTATDSSSNSSQKREPTTRTISSPTS) is disordered. Over residues 146–156 (TTATDSSSNSS) the composition is skewed to polar residues. The KBD domain occupies 197–252 (SYPQVTFPEDDEEIVRINPREKIWMTGYEDYRHAPVRGKYLDTTEDADSYVRFAKG). Residues tyrosine 224 and tyrosine 227 each carry the phosphotyrosine modification. Residues 274–294 (DPKGSVIKTQPPRAKSRRRKE) form a disordered region. The SPR domain occupies 300 to 408 (RCVYCRDMFN…CRCCGGKHKA (109 aa)).

As to quaternary structure, homodimer and heterodimer. Able to interact with SPRED1 to form heterodimers. Interacts with RAS. May interact with ZDHHC13 (via ANK repeats) and ZDHHC17 (via ANK repeats). Interacts with TESK1. Interacts with NF1. In terms of processing, phosphorylated on serine and threonine residues. Phosphorylated on tyrosine. Phosphorylation of Tyr-224 and Tyr-227 are required for ubiquitination. Post-translationally, ubiquitinated; leading to degradation by the proteasome. As to expression, predominantly expressed in lung, liver and testis. In testis, it is specially found in mature spermatids projecting into the lumen of the seminiferous. Strongly expressed in glandular epithelia. Also expressed in embryonic tissues such as heart, lung, liver and brain.

It is found in the cell membrane. It localises to the cytoplasmic vesicle. The protein localises to the secretory vesicle membrane. The protein resides in the cytoplasm. Negatively regulates Ras signaling pathways and downstream activation of MAP kinases. Recruits and translocates NF1 to the cell membrane, thereby enabling NF1-dependent hydrolysis of active GTP-bound Ras to inactive GDP-bound Ras. Inhibits fibroblast growth factor (FGF)-induced retinal lens fiber differentiation, probably by inhibiting FGF-mediated phosphorylation of ERK1/2. Inhibits TGFB-induced epithelial-to-mesenchymal transition in lens epithelial cells. This Mus musculus (Mouse) protein is Sprouty-related, EVH1 domain-containing protein 2 (Spred2).